The primary structure comprises 122 residues: Diacylglycerol kinase (122 aa).

ATP contacts are provided by arginine 10 and tyrosine 17. Substrate-binding positions include arginine 10, 14–19 (AAGYSW), and 23–26 (RAAW). Glutamate 29 is a binding site for ATP. Glutamate 29 lines the a divalent metal cation pocket. Substrate contacts are provided by residues 31–35 (AFRQE), 48–51 (WLDV), arginine 56, and glutamate 70. The chain crosses the membrane as a helical span at residues 35 to 55 (EGVAVLLAVVIACWLDVDAIT). Residues 57 to 77 (VLLISSVMLVMIVEILNSAIE) traverse the membrane as a helical segment. The Proton acceptor role is filled by glutamate 70. Residues glutamate 77, 86 to 88 (EYH), and 95 to 96 (KD) each bind ATP. Glutamate 77 lines the a divalent metal cation pocket. The chain crosses the membrane as a helical span at residues 98 to 118 (GSAAVLIAIIVAVITWCILLW). Substrate-binding positions include serine 99 and 113–118 (WCILLW).

This sequence belongs to the bacterial diacylglycerol kinase family. Mg(2+) serves as cofactor.

It is found in the cell inner membrane. It catalyses the reaction a 1,2-diacyl-sn-glycerol + ATP = a 1,2-diacyl-sn-glycero-3-phosphate + ADP + H(+). Functionally, catalyzes the ATP-dependent phosphorylation of sn-l,2-diacylglycerol (DAG) to phosphatidic acid. Involved in the recycling of diacylglycerol produced as a by-product during membrane-derived oligosaccharide (MDO) biosynthesis. This is Diacylglycerol kinase (dgkA) from Shigella flexneri.